The chain runs to 206 residues: Large ribosomal subunit protein bL25 (206 aa).

The protein belongs to the bacterial ribosomal protein bL25 family. CTC subfamily. In terms of assembly, part of the 50S ribosomal subunit; part of the 5S rRNA/L5/L18/L25 subcomplex. Contacts the 5S rRNA. Binds to the 5S rRNA independently of L5 and L18.

In terms of biological role, this is one of the proteins that binds to the 5S RNA in the ribosome where it forms part of the central protuberance. This Paraburkholderia phytofirmans (strain DSM 17436 / LMG 22146 / PsJN) (Burkholderia phytofirmans) protein is Large ribosomal subunit protein bL25.